The primary structure comprises 274 residues: Undecaprenyl-diphosphatase (274 aa).

A run of 7 helical transmembrane segments spans residues 4 to 24 (PLFV…FLPI), 41 to 61 (DATS…AVCW), 83 to 103 (FVGL…MFHS), 108 to 128 (LLFN…LILW), 184 to 204 (AAEF…VYDL), 218 to 238 (VFAI…KAFI), and 246 to 266 (FIAF…TWQL).

Belongs to the UppP family.

The protein resides in the cell inner membrane. The enzyme catalyses di-trans,octa-cis-undecaprenyl diphosphate + H2O = di-trans,octa-cis-undecaprenyl phosphate + phosphate + H(+). Catalyzes the dephosphorylation of undecaprenyl diphosphate (UPP). Confers resistance to bacitracin. This is Undecaprenyl-diphosphatase from Aromatoleum aromaticum (strain DSM 19018 / LMG 30748 / EbN1) (Azoarcus sp. (strain EbN1)).